We begin with the raw amino-acid sequence, 226 residues long: dTTP/UTP pyrophosphatase (226 aa).

Catalysis depends on Asp-85, which acts as the Proton acceptor.

The protein belongs to the Maf family. YhdE subfamily. A divalent metal cation is required as a cofactor.

The protein resides in the cytoplasm. It catalyses the reaction dTTP + H2O = dTMP + diphosphate + H(+). The catalysed reaction is UTP + H2O = UMP + diphosphate + H(+). Functionally, nucleoside triphosphate pyrophosphatase that hydrolyzes dTTP and UTP. May have a dual role in cell division arrest and in preventing the incorporation of modified nucleotides into cellular nucleic acids. This chain is dTTP/UTP pyrophosphatase, found in Psychrobacter cryohalolentis (strain ATCC BAA-1226 / DSM 17306 / VKM B-2378 / K5).